We begin with the raw amino-acid sequence, 398 residues long: KiSS-1 receptor (398 aa).

Residues 1 to 46 lie on the Extracellular side of the membrane; sequence MHTVATSGPNASWGAPANASGCPGCGANASDGPVPSPRAVDAWLVP. N-linked (GlcNAc...) asparagine glycosylation is found at N10, N18, and N28. A helical transmembrane segment spans residues 47–67; the sequence is LFFAALMLLGLVGNSLVIYVI. Over 68 to 78 the chain is Cytoplasmic; the sequence is CRHKPMRTVTN. The chain crosses the membrane as a helical span at residues 79-101; that stretch reads FYIANLAATDVTFLLCCVPFTAL. Over 102–120 the chain is Extracellular; sequence LYPLPGWVLGDFMCKFVNY. An intrachain disulfide couples C115 to C191. The helical transmembrane segment at 121-138 threads the bilayer; the sequence is IQQVSVQATCATLTAMSV. The Cytoplasmic portion of the chain corresponds to 139–157; that stretch reads DRWYVTVFPLRALHRRTPR. The chain crosses the membrane as a helical span at residues 158–178; sequence LALAVSLSIWVGSAAVSAPVL. Over 179-202 the chain is Extracellular; that stretch reads ALHRLSPGPRAYCSEAFPSRALER. Residues 203-223 form a helical membrane-spanning segment; that stretch reads AFALYNLLALYLLPLLATCAC. The Cytoplasmic portion of the chain corresponds to 224–263; sequence YAAMLRHLGRVAVRPAPADSALQGQVLAERAGAVRAKVSR. Residues 264–284 form a helical membrane-spanning segment; the sequence is LVAAVVLLFAACWGPIQLFLV. The Extracellular segment spans residues 285-305; sequence LQALGPAGSWHPRSYAAYALK. Residues 306–328 form a helical membrane-spanning segment; it reads TWAHCMSYSNSALNPLLYAFLGS. The Cytoplasmic portion of the chain corresponds to 329-398; it reads HFRQAFRRVC…CVLGEDNAPL (70 aa). The segment at 341-363 is disordered; sequence APRRPRRPRRPGPSDPAAPHAEL.

It belongs to the G-protein coupled receptor 1 family. In terms of tissue distribution, most highly expressed in the pancreas, placenta and spinal cord, with lower-level of expression in peripheral blood leukocytes, kidney, lung, fetal liver, stomach, small intestine, testes, spleen, thymus, adrenal glands and lymph nodes. In the adult brain, expressed in the superior frontal gyrus, putamen, caudate nucleus, cingulate gyrus, nucleus accumbens, hippocampus, pons and amygdala, as well as the hypothalamus and pituitary. Expression levels are higher in early (7-9 weeks) than term placentas. Expression levels were increased in both early placentas and molar pregnancies and were reduced in choriocarcinoma cells. Expressed at higher levels in first trimester trophoblasts than at term of gestation. Also found in the extravillous trophoblast suggesting endocrine/paracrine activation mechanism.

It localises to the cell membrane. Its function is as follows. Receptor for metastin (kisspeptin-54 or kp-54), a C-terminally amidated peptide of KiSS1. KiSS1 is a metastasis suppressor protein that suppresses metastases in malignant melanomas and in some breast carcinomas without affecting tumorigenicity. The metastasis suppressor properties may be mediated in part by cell cycle arrest and induction of apoptosis in malignant cells. The receptor is essential for normal gonadotropin-released hormone physiology and for puberty. The hypothalamic KiSS1/KISS1R system is a pivotal factor in central regulation of the gonadotropic axis at puberty and in adulthood. The receptor is also probably involved in the regulation and fine-tuning of trophoblast invasion generated by the trophoblast itself. Analysis of the transduction pathways activated by the receptor identifies coupling to phospholipase C and intracellular calcium release through pertussis toxin-insensitive G(q) proteins. The protein is KiSS-1 receptor (KISS1R) of Homo sapiens (Human).